Here is a 201-residue protein sequence, read N- to C-terminus: Type III effector protein HopBF1 (201 aa).

Residues Ser39, Gln40, Lys41, Asp106, Ile108, and Asp113 each coordinate ATP. The active site involves Asp154. An ATP-binding site is contributed by Gln156.

Belongs to the HopBF1 family.

Its subcellular location is the secreted. It localises to the host cell. It catalyses the reaction L-seryl-[protein] + ATP = O-phospho-L-seryl-[protein] + ADP + H(+). In terms of biological role, effector protein that targets and inactivates the plant molecular chaperone HSP90 during infection. HopBF1 is recognized by HSP90 as a host client. As a result, HopBF1 phosphorylates HSP90, leading to the inactivation of the HSP90 ATPase activity and chaperone function. Phosphorylation of HSP90 prevents activation of immune receptors that trigger the hypersensitive response in plants. HopBF1 is sufficient to cause severe disease symptoms in plants infected with P.syringae. In vitro, can phosphorylate the recombinant yeast HSP82 (HSP90) on Ser-99, Triticum aestivum (wheat) HSP90 and human HSP 90-beta, but not the prokaryotic HSP90 orthologs, HtpG from E.coli and P.syringae. Does not act on generic protein kinase substrates such as casein and myelin basic protein, as well as the yeast HSP70s and Bip chaperones. In Pseudomonas syringae pv. syringae (strain FF5), this protein is Type III effector protein HopBF1.